We begin with the raw amino-acid sequence, 161 residues long: Nucleotide-binding protein Lferr_1091 (161 aa).

Belongs to the YajQ family.

Nucleotide-binding protein. This Acidithiobacillus ferrooxidans (strain ATCC 53993 / BNL-5-31) (Leptospirillum ferrooxidans (ATCC 53993)) protein is Nucleotide-binding protein Lferr_1091.